Here is a 206-residue protein sequence, read N- to C-terminus: Small ribosomal subunit protein uS4 (206 aa).

The 61-residue stretch at 96–156 (GRLDNVVYRM…EKAKKQSRVK (61 aa)) folds into the S4 RNA-binding domain.

This sequence belongs to the universal ribosomal protein uS4 family. As to quaternary structure, part of the 30S ribosomal subunit. Contacts protein S5. The interaction surface between S4 and S5 is involved in control of translational fidelity.

Its function is as follows. One of the primary rRNA binding proteins, it binds directly to 16S rRNA where it nucleates assembly of the body of the 30S subunit. In terms of biological role, with S5 and S12 plays an important role in translational accuracy. The protein is Small ribosomal subunit protein uS4 of Cronobacter sakazakii (strain ATCC BAA-894) (Enterobacter sakazakii).